Reading from the N-terminus, the 253-residue chain is Triosephosphate isomerase (253 aa).

Residue 9–11 (NWK) participates in substrate binding. Histidine 95 functions as the Electrophile in the catalytic mechanism. The Proton acceptor role is filled by glutamate 167. Substrate-binding positions include glycine 173, serine 213, and 234 to 235 (GG). Serine 213 is subject to Phosphoserine.

Belongs to the triosephosphate isomerase family. Homodimer.

It localises to the cytoplasm. The enzyme catalyses D-glyceraldehyde 3-phosphate = dihydroxyacetone phosphate. It functions in the pathway carbohydrate biosynthesis; gluconeogenesis. The protein operates within carbohydrate degradation; glycolysis; D-glyceraldehyde 3-phosphate from glycerone phosphate: step 1/1. Its function is as follows. Involved in the gluconeogenesis. Catalyzes stereospecifically the conversion of dihydroxyacetone phosphate (DHAP) to D-glyceraldehyde-3-phosphate (G3P). This is Triosephosphate isomerase from Bacillus velezensis (strain DSM 23117 / BGSC 10A6 / LMG 26770 / FZB42) (Bacillus amyloliquefaciens subsp. plantarum).